Here is a 172-residue protein sequence, read N- to C-terminus: Large ribosomal subunit protein bL17m (172 aa).

The N-terminal 8 residues, 1-8 (MRLSFAAA), are a transit peptide targeting the mitochondrion.

It belongs to the bacterial ribosomal protein bL17 family. In terms of assembly, component of the mitochondrial ribosome large subunit (39S) which comprises a 16S rRNA and about 50 distinct proteins.

The protein localises to the mitochondrion. This Bos taurus (Bovine) protein is Large ribosomal subunit protein bL17m (MRPL17).